Reading from the N-terminus, the 210-residue chain is Cytochrome c biogenesis ATP-binding export protein CcmA (210 aa).

In terms of domain architecture, ABC transporter spans 3 to 209 (LTVTNLACAR…PADDPFAGVT (207 aa)). 35–42 (GPNGIGKT) provides a ligand contact to ATP.

This sequence belongs to the ABC transporter superfamily. CcmA exporter (TC 3.A.1.107) family. As to quaternary structure, the complex is composed of two ATP-binding proteins (CcmA) and two transmembrane proteins (CcmB).

The protein localises to the cell inner membrane. It catalyses the reaction heme b(in) + ATP + H2O = heme b(out) + ADP + phosphate + H(+). Part of the ABC transporter complex CcmAB involved in the biogenesis of c-type cytochromes; once thought to export heme, this seems not to be the case, but its exact role is uncertain. Responsible for energy coupling to the transport system. The sequence is that of Cytochrome c biogenesis ATP-binding export protein CcmA from Cereibacter sphaeroides (strain ATCC 17023 / DSM 158 / JCM 6121 / CCUG 31486 / LMG 2827 / NBRC 12203 / NCIMB 8253 / ATH 2.4.1.) (Rhodobacter sphaeroides).